The primary structure comprises 228 residues: Heptaprenylglyceryl phosphate synthase (228 aa).

Lys12 serves as a coordination point for sn-glycerol 1-phosphate. 2 residues coordinate Mg(2+): Asp14 and Thr40. Sn-glycerol 1-phosphate contacts are provided by residues 159–164, Gly189, and 209–210; these read YLEYSG and GN.

The protein belongs to the GGGP/HepGP synthase family. Group I subfamily. In terms of assembly, homodimer. Requires Mg(2+) as cofactor.

It carries out the reaction sn-glycerol 1-phosphate + all-trans-heptaprenyl diphosphate = 3-heptaprenyl-sn-glycero-1-phosphate + diphosphate. The protein operates within membrane lipid metabolism; glycerophospholipid metabolism. Functionally, prenyltransferase that catalyzes in vivo the transfer of the heptaprenyl moiety of heptaprenyl pyrophosphate (HepPP; 35 carbon atoms) to the C3 hydroxyl of sn-glycerol-1-phosphate (G1P), producing heptaprenylglyceryl phosphate (HepGP). This reaction is an ether-bond-formation step in the biosynthesis of archaea-type G1P-based membrane lipids found in Bacillales. This is Heptaprenylglyceryl phosphate synthase from Geobacillus sp. (strain WCH70).